The sequence spans 102 residues: Small ribosomal subunit protein uS10 (102 aa).

This sequence belongs to the universal ribosomal protein uS10 family. Part of the 30S ribosomal subunit.

Functionally, involved in the binding of tRNA to the ribosomes. The protein is Small ribosomal subunit protein uS10 of Lactobacillus delbrueckii subsp. bulgaricus (strain ATCC 11842 / DSM 20081 / BCRC 10696 / JCM 1002 / NBRC 13953 / NCIMB 11778 / NCTC 12712 / WDCM 00102 / Lb 14).